Reading from the N-terminus, the 964-residue chain is Lon protease homolog, mitochondrial (964 aa).

The Lon N-terminal domain maps to 89 to 300 (VIALPLPHRP…LTLELVKKEM (212 aa)). 455-462 (GPPGVGKT) contributes to the ATP binding site. The interval 663-740 (GVSNEPDHES…TSKGNKGTDG (78 aa)) is disordered. Positions 673–687 (VSASVTEESGNGDNT) are enriched in polar residues. The span at 688–698 (TTKDEILKDPA) shows a compositional bias: basic and acidic residues. Positions 703–712 (SVTNNVTNPA) are enriched in polar residues. Positions 773–957 (HTPVGVVMGL…SEIYDLAFQS (185 aa)) constitute a Lon proteolytic domain. Catalysis depends on residues Ser-863 and Lys-906.

It belongs to the peptidase S16 family. Homoheptamer. Organized in a ring with a central cavity.

It localises to the mitochondrion matrix. It catalyses the reaction Hydrolysis of proteins in presence of ATP.. ATP-dependent serine protease that mediates the selective degradation of misfolded, unassembled or oxidatively damaged polypeptides as well as certain short-lived regulatory proteins in the mitochondrial matrix. May also have a chaperone function in the assembly of inner membrane protein complexes. Participates in the regulation of mitochondrial gene expression and in the maintenance of the integrity of the mitochondrial genome. Binds to mitochondrial DNA in a site-specific manner. The protein is Lon protease homolog, mitochondrial (LON2) of Zea mays (Maize).